Reading from the N-terminus, the 351-residue chain is Protein MSS2, mitochondrial (351 aa).

2 TPR repeats span residues 155–188 (HLTV…ENST) and 260–294 (KECF…MDLE).

Interacts with COX18.

The protein resides in the mitochondrion inner membrane. Required to stabilize mitochondrial cytochrome C oxidase subunit 2 (COX2) and to translocate the C-terminal domain of COX2 through the inner membrane. This is Protein MSS2, mitochondrial (MSS2) from Saccharomyces cerevisiae (strain ATCC 204508 / S288c) (Baker's yeast).